Reading from the N-terminus, the 417-residue chain is Actin-related protein 10 (417 aa).

Belongs to the actin family. In terms of assembly, subunit of dynactin, a multiprotein complex part of a tripartite complex with dynein and a adapter, such as BICDL1, BICD2 or HOOK3. The dynactin complex is built around ACTR1A/ACTB filament and consists of an actin-related filament composed of a shoulder domain, a pointed end and a barbed end. Its length is defined by its flexible shoulder domain. The soulder is composed of 2 DCTN1 subunits, 4 DCTN2 and 2 DCTN3. The 4 DCNT2 (via N-terminus) bind the ACTR1A filament and act as molecular rulers to determine the length. The pointed end is important for binding dynein-dynactin cargo adapters. Consists of 4 subunits: ACTR10, DCNT4, DCTN5 and DCTN6. The barbed end is composed of a CAPZA1:CAPZB heterodimers, which binds ACTR1A/ACTB filament and dynactin and stabilizes dynactin.

Its subcellular location is the cytoplasm. The protein localises to the cytoskeleton. In terms of biological role, part of the dynactin complex that activates the molecular motor dynein for ultra-processive transport along microtubules. The chain is Actin-related protein 10 (ACTR10) from Sus scrofa (Pig).